A 241-amino-acid polypeptide reads, in one-letter code: DnaA regulatory inactivator Hda (241 aa).

It belongs to the DnaA family. HdA subfamily. In terms of assembly, the active form seems to be an ADP-bound monomer. Forms the RIDA complex (regulatory inactivation of DnaA) of ATP-DnaA, ADP-Hda and the DNA-loaded beta sliding clamp (dnaN).

In terms of biological role, mediates the interaction of DNA replication initiator protein DnaA with DNA polymerase subunit beta sliding clamp (dnaN). Stimulates hydrolysis of ATP-DnaA to ADP-DnaA, rendering DnaA inactive for reinitiation, a process called regulatory inhibition of DnaA or RIDA. This chain is DnaA regulatory inactivator Hda, found in Salmonella arizonae (strain ATCC BAA-731 / CDC346-86 / RSK2980).